The primary structure comprises 455 residues: Chromosomal replication initiator protein DnaA (455 aa).

Residues 1–70 (MTNETWVQVR…RMRLTEAGSP (70 aa)) form a domain I, interacts with DnaA modulators region. The interval 70-113 (PVERLEFAVSNTPRAPLKEVKAAAPAASPARARPAPPEEDLRGA) is domain II. Positions 87–109 (KEVKAAAPAASPARARPAPPEED) are disordered. The span at 91–102 (AAAPAASPARAR) shows a compositional bias: low complexity. The segment at 114-335 (PLDARFTFDS…GALTRLFAFA (222 aa)) is domain III, AAA+ region. 4 residues coordinate ATP: G158, G160, K161, and T162. The segment at 336 to 455 (SLVGREITLD…LQLLRRLLQA (120 aa)) is domain IV, binds dsDNA.

The protein belongs to the DnaA family. As to quaternary structure, oligomerizes as a right-handed, spiral filament on DNA at oriC.

Its subcellular location is the cytoplasm. In terms of biological role, plays an essential role in the initiation and regulation of chromosomal replication. ATP-DnaA binds to the origin of replication (oriC) to initiate formation of the DNA replication initiation complex once per cell cycle. Binds the DnaA box (a 9 base pair repeat at the origin) and separates the double-stranded (ds)DNA. Forms a right-handed helical filament on oriC DNA; dsDNA binds to the exterior of the filament while single-stranded (ss)DNA is stabiized in the filament's interior. The ATP-DnaA-oriC complex binds and stabilizes one strand of the AT-rich DNA unwinding element (DUE), permitting loading of DNA polymerase. After initiation quickly degrades to an ADP-DnaA complex that is not apt for DNA replication. Binds acidic phospholipids. This chain is Chromosomal replication initiator protein DnaA, found in Cereibacter sphaeroides (strain ATCC 17029 / ATH 2.4.9) (Rhodobacter sphaeroides).